The following is a 143-amino-acid chain: Transcriptional regulator MraZ (143 aa).

SpoVT-AbrB domains lie at Thr-5–Glu-47 and Ala-76–Ala-119.

The protein belongs to the MraZ family. Forms oligomers.

The protein localises to the cytoplasm. Its subcellular location is the nucleoid. The protein is Transcriptional regulator MraZ of Corynebacterium urealyticum (strain ATCC 43042 / DSM 7109).